The primary structure comprises 347 residues: MELLCSPTSLSSSFALSSALLVPRSFSMPGTRRFMVLCSSQKESQMTVSVTGATGFIGRRLVQRLRADNHAIRVLTRSKSKAEQIFPAKDFPGIVIAEESEWKNCVQGSTAVVNLAGLPISTRWSPEIKKEIKGSRIRVTSKVVDLINNSPAEARPTVLVSATAVGYYGTSETGVFDENSPSGKDYLAEVCREWEGTALKANKDVRVALIRIGVVLGKDGGALAMMIPFFQMFAGGPLGSGQQWFSWIHVDDLVNLIYEALTNPSYKGVINGTAPNPVRLGEMCQQLGSVLSRPSWLPVPDFALKALLGEGATVVLEGQKVLPVRAKELGFEFKYKYVKDALRAIMQ.

The transit peptide at 1 to 37 (MELLCSPTSLSSSFALSSALLVPRSFSMPGTRRFMVL) directs the protein to the chloroplast. NADP(+)-binding positions include 54 to 57 (TGFI), 76 to 77 (TR), 115 to 119 (LAGLP), and arginine 136.

Can form homodimers. Expressed in leaves, stems and flower buds.

Its subcellular location is the plastid. The protein resides in the chloroplast inner membrane. It localises to the chloroplast. Its function is as follows. Putative NADP-dependent oxidoreductase that acts as a positive regulator of chloroplast division. May play a role at an early stage of the division process. The sequence is that of Epimerase family protein SDR39U1 homolog, chloroplastic from Arabidopsis thaliana (Mouse-ear cress).